Reading from the N-terminus, the 313-residue chain is Foldase protein PrsA (313 aa).

Residues 1–20 (MKKKLLAGAITLLSVATLAA) form the signal peptide. Residue Cys-21 is the site of N-palmitoyl cysteine attachment. Cys-21 is lipidated: S-diacylglycerol cysteine. In terms of domain architecture, PpiC spans 143–241 (TPDVTAQIIR…SQYYIVKLTK (99 aa)).

The protein belongs to the PrsA family.

It is found in the cell membrane. The catalysed reaction is [protein]-peptidylproline (omega=180) = [protein]-peptidylproline (omega=0). Functionally, plays a major role in protein secretion by helping the post-translocational extracellular folding of several secreted proteins. The sequence is that of Foldase protein PrsA from Streptococcus pneumoniae (strain ATCC BAA-255 / R6).